The primary structure comprises 502 residues: ATP synthase subunit beta, chloroplastic (502 aa).

Residue Ser17 is modified to Phosphoserine. ATP is bound at residue 176–183; it reads GGAGVGKT.

The protein belongs to the ATPase alpha/beta chains family. F-type ATPases have 2 components, CF(1) - the catalytic core - and CF(0) - the membrane proton channel. CF(1) has five subunits: alpha(3), beta(3), gamma(1), delta(1), epsilon(1). CF(0) has four main subunits: a(1), b(1), b'(1) and c(9-12).

It is found in the plastid. The protein resides in the chloroplast thylakoid membrane. The catalysed reaction is ATP + H2O + 4 H(+)(in) = ADP + phosphate + 5 H(+)(out). Functionally, produces ATP from ADP in the presence of a proton gradient across the membrane. The catalytic sites are hosted primarily by the beta subunits. This is ATP synthase subunit beta, chloroplastic from Lepidium virginicum (Virginia pepperweed).